Consider the following 642-residue polypeptide: Probable malate:quinone oxidoreductase (642 aa).

The unknown stretch occupies residues 1 to 142 (MIVVFRHEST…TTRGDKRKLN (142 aa)). The segment at 143–642 (MSDSPKNAQK…TQKTLKLEKA (500 aa)) is MQO domain.

The protein in the C-terminal section; belongs to the MQO family. FAD is required as a cofactor.

The enzyme catalyses (S)-malate + a quinone = a quinol + oxaloacetate. Its pathway is carbohydrate metabolism; tricarboxylic acid cycle; oxaloacetate from (S)-malate (quinone route): step 1/1. The protein is Probable malate:quinone oxidoreductase (mqo) of Corynebacterium efficiens (strain DSM 44549 / YS-314 / AJ 12310 / JCM 11189 / NBRC 100395).